An 821-amino-acid polypeptide reads, in one-letter code: Ent-isokaur-15-ene synthase (821 aa).

Positions 556, 560, 701, 705, and 709 each coordinate Mg(2+). Positions 556 to 560 (DDFFD) match the DDXXD motif motif.

This sequence belongs to the terpene synthase family. Mg(2+) is required as a cofactor.

The enzyme catalyses ent-copalyl diphosphate = ent-isokaurene + diphosphate. It functions in the pathway secondary metabolite biosynthesis; terpenoid biosynthesis. Its function is as follows. Involved in the biosynthesis of ent-kaurene diterpenoids natural products. Catalyzes the conversion of ent-copalyl diphosphate to the phytoalexin precursor ent-isokaur-15-ene. The protein is Ent-isokaur-15-ene synthase of Oryza sativa subsp. indica (Rice).